Reading from the N-terminus, the 334-residue chain is Ornithine carbamoyltransferase (334 aa).

Residues 57 to 60, Gln84, Arg108, and 135 to 138 contribute to the carbamoyl phosphate site; these read STRT and HPTQ. Residues Asn168, Asp232, and 236–237 each bind L-ornithine; that span reads SM. Carbamoyl phosphate contacts are provided by residues 274 to 275 and Arg321; that span reads CL.

The protein belongs to the aspartate/ornithine carbamoyltransferase superfamily. OTCase family.

The protein resides in the cytoplasm. The catalysed reaction is carbamoyl phosphate + L-ornithine = L-citrulline + phosphate + H(+). The protein operates within amino-acid biosynthesis; L-arginine biosynthesis; L-arginine from L-ornithine and carbamoyl phosphate: step 1/3. Functionally, reversibly catalyzes the transfer of the carbamoyl group from carbamoyl phosphate (CP) to the N(epsilon) atom of ornithine (ORN) to produce L-citrulline. This chain is Ornithine carbamoyltransferase, found in Actinobacillus pleuropneumoniae serotype 5b (strain L20).